The sequence spans 176 residues: Ribosome maturation factor RimM (176 aa).

A PRC barrel domain is found at 103 to 176; the sequence is QNDEYYFYEI…KIVVKELEWI (74 aa).

It belongs to the RimM family. Binds ribosomal protein uS19.

Its subcellular location is the cytoplasm. Functionally, an accessory protein needed during the final step in the assembly of 30S ribosomal subunit, possibly for assembly of the head region. Essential for efficient processing of 16S rRNA. May be needed both before and after RbfA during the maturation of 16S rRNA. It has affinity for free ribosomal 30S subunits but not for 70S ribosomes. This is Ribosome maturation factor RimM from Thermotoga neapolitana (strain ATCC 49049 / DSM 4359 / NBRC 107923 / NS-E).